The chain runs to 447 residues: Adenylosuccinate synthetase (447 aa).

GTP-binding positions include 12 to 18 (GDEGKGK) and 40 to 42 (GHT). The active-site Proton acceptor is the D13. Residues D13 and G40 each contribute to the Mg(2+) site. Residues 13–16 (DEGK), 38–41 (NAGH), T128, R142, Q223, T238, and R302 contribute to the IMP site. The active-site Proton donor is the H41. 298 to 304 (TTTGRRR) provides a ligand contact to substrate. GTP-binding positions include R304, 330–332 (KLD), and 412–414 (SLG).

It belongs to the adenylosuccinate synthetase family. As to quaternary structure, homodimer. Mg(2+) serves as cofactor.

It localises to the cytoplasm. The catalysed reaction is IMP + L-aspartate + GTP = N(6)-(1,2-dicarboxyethyl)-AMP + GDP + phosphate + 2 H(+). It functions in the pathway purine metabolism; AMP biosynthesis via de novo pathway; AMP from IMP: step 1/2. Functionally, plays an important role in the de novo pathway of purine nucleotide biosynthesis. Catalyzes the first committed step in the biosynthesis of AMP from IMP. The protein is Adenylosuccinate synthetase of Thermosynechococcus vestitus (strain NIES-2133 / IAM M-273 / BP-1).